The primary structure comprises 287 residues: Protease HtpX (287 aa).

2 helical membrane passes run 4-24 (IFLLIATNLAVLLVASIVMSI) and 33-53 (GGLLVFAAIFGFGGAFISLAI). Residue His-139 participates in Zn(2+) binding. Glu-140 is a catalytic residue. Residue His-143 participates in Zn(2+) binding. The next 2 membrane-spanning stretches (helical) occupy residues 154–174 (LIQGVVNTFVIFAARVVAGII) and 195–215 (AVVFVLDMLFGILASIIVAYF). Glu-220 provides a ligand contact to Zn(2+).

The protein belongs to the peptidase M48B family. Zn(2+) is required as a cofactor.

The protein localises to the cell inner membrane. This Shewanella sp. (strain ANA-3) protein is Protease HtpX.